Consider the following 185-residue polypeptide: MKNLNQVVDALKQGNVIAYPTEGVFGVGCDPDNEQALLNLLDVKKRPKEKGLILIAASIEQLLPYIDLEQLTEEQVNTIKASWPGPVTWIVPVKTSTLPLVTGQFDSIAVRVTAHPQVKAICNAFGKPITSTSANLSGLEPCRSVTEVEAQLGDTGVVIFQGEVGNRTQPTEIRDAKTGNTLRQG.

Residues 1-185 enclose the YrdC-like domain; it reads MKNLNQVVDA…AKTGNTLRQG (185 aa).

The protein belongs to the SUA5 family. TsaC subfamily.

It localises to the cytoplasm. The enzyme catalyses L-threonine + hydrogencarbonate + ATP = L-threonylcarbamoyladenylate + diphosphate + H2O. In terms of biological role, required for the formation of a threonylcarbamoyl group on adenosine at position 37 (t(6)A37) in tRNAs that read codons beginning with adenine. Catalyzes the conversion of L-threonine, HCO(3)(-)/CO(2) and ATP to give threonylcarbamoyl-AMP (TC-AMP) as the acyladenylate intermediate, with the release of diphosphate. The sequence is that of Threonylcarbamoyl-AMP synthase from Aliivibrio fischeri (strain ATCC 700601 / ES114) (Vibrio fischeri).